We begin with the raw amino-acid sequence, 43 residues long: Delta-actitoxin-Bca1a (43 aa).

3 cysteine pairs are disulfide-bonded: Cys1/Cys41, Cys3/Cys31, and Cys24/Cys42.

It is found in the secreted. The protein resides in the nematocyst. Binds specifically to voltage-gated sodium channels (Nav), thereby delaying their inactivation during signal transduction. Thus it strongly stimulates mammalian cardiac muscle contraction. This Bunodosoma capense (Knobbly sea anemone) protein is Delta-actitoxin-Bca1a.